Reading from the N-terminus, the 194-residue chain is Lymphocyte antigen 6 complex locus protein G5b (194 aa).

The signal sequence occupies residues 1 to 18 (MRARVLVGMLTMVGFAMG). In terms of domain architecture, UPAR/Ly6 spans 26–118 (RTCHLCLLED…SAQHQSTLRG (93 aa)). 5 cysteine pairs are disulfide-bonded: C28-C55, C31-C40, C47-C73, C81-C98, and C99-C104. N63 carries N-linked (GlcNAc...) asparagine glycosylation. N141 carries N-linked (GlcNAc...) asparagine glycosylation.

As to quaternary structure, monomer. Post-translationally, N-glycosylated.

The protein localises to the secreted. The protein is Lymphocyte antigen 6 complex locus protein G5b (Ly6g5b) of Mus musculus (Mouse).